A 311-amino-acid polypeptide reads, in one-letter code: Olfactory receptor 5AN1 (311 aa).

The Extracellular portion of the chain corresponds to 1 to 26 (MTGGGNITEITYFILLGFSDFPRIIK). N-linked (GlcNAc...) asparagine glycosylation is present at N6. Residues 27–47 (VLFTIFLVIYITSLAWNLSLI) traverse the membrane as a helical segment. Over 48-55 (VLIRMDSH) the chain is Cytoplasmic. Residues 56-76 (LHTPMYFFLSNLSFIDVCYIS) form a helical membrane-spanning segment. Topologically, residues 77 to 100 (STVPKMLSNLLQEQQTITFVGCII) are extracellular. A disulfide bond links C98 and C190. The chain crosses the membrane as a helical span at residues 101–121 (QYFIFSTMGLSESCLMTAMAY). Over 122 to 134 (DRYAAICNPLLYS) the chain is Cytoplasmic. The chain crosses the membrane as a helical span at residues 135 to 155 (SIMSPTLCVWMVLGAYMTGLT). At 156–197 (ASLFQIGALLQLHFCGSNVIRHFFCDMPQLLILSCTDTFFVQ) the chain is on the extracellular side. Residues 198–218 (VMTAILTMFFGIASALVIMIS) form a helical membrane-spanning segment. Topologically, residues 219-238 (YGYIGISIMKITSAKGRSKA) are cytoplasmic. A helical membrane pass occupies residues 239–259 (FNTCASHLTAVSLFYTSGIFV). Residues 260-272 (YLSSSSGGSSSFD) are Extracellular-facing. A helical membrane pass occupies residues 273–293 (RFASVFYTVVIPMLNPLIYSL). The Cytoplasmic segment spans residues 294 to 311 (RNKEIKDALKRLQKRKCC).

It belongs to the G-protein coupled receptor 1 family.

Its subcellular location is the cell membrane. Functionally, odorant receptor for musk, which specifically recognizes muscone, musk xylol, and musk ketone. Ligand-binding causes a conformation change that triggers signaling via G(s)-class of G alpha protein GNAL, activating adenylyl cyclase. The chain is Olfactory receptor 5AN1 from Homo sapiens (Human).